The primary structure comprises 562 residues: Formate--tetrahydrofolate ligase (562 aa).

ATP is bound at residue 71-78; the sequence is TPAGEGKS.

This sequence belongs to the formate--tetrahydrofolate ligase family.

It carries out the reaction (6S)-5,6,7,8-tetrahydrofolate + formate + ATP = (6R)-10-formyltetrahydrofolate + ADP + phosphate. Its pathway is one-carbon metabolism; tetrahydrofolate interconversion. In Bacillus thuringiensis (strain Al Hakam), this protein is Formate--tetrahydrofolate ligase.